A 156-amino-acid polypeptide reads, in one-letter code: Protein-export protein SecB (156 aa).

This sequence belongs to the SecB family. Homotetramer, a dimer of dimers. One homotetramer interacts with 1 SecA dimer.

The protein localises to the cytoplasm. One of the proteins required for the normal export of preproteins out of the cell cytoplasm. It is a molecular chaperone that binds to a subset of precursor proteins, maintaining them in a translocation-competent state. It also specifically binds to its receptor SecA. The polypeptide is Protein-export protein SecB (Paraburkholderia phymatum (strain DSM 17167 / CIP 108236 / LMG 21445 / STM815) (Burkholderia phymatum)).